A 338-amino-acid polypeptide reads, in one-letter code: Ketol-acid reductoisomerase (NADP(+)) (338 aa).

Residues 3–183 enclose the KARI N-terminal Rossmann domain; that stretch reads IELLYDADAD…GGARAGVIPT (181 aa). NADP(+) is bound by residues 26-29, R49, S52, S54, and 84-87; these read YGSQ and DTSQ. Residue H109 is part of the active site. Residue G135 coordinates NADP(+). The 146-residue stretch at 184 to 329 folds into the KARI C-terminal knotted domain; it reads TFEAETVTDL…AKLRDLMSWV (146 aa). Mg(2+) is bound by residues D192, E196, E228, and E232. S253 contacts substrate.

This sequence belongs to the ketol-acid reductoisomerase family. Mg(2+) serves as cofactor.

It catalyses the reaction (2R)-2,3-dihydroxy-3-methylbutanoate + NADP(+) = (2S)-2-acetolactate + NADPH + H(+). The catalysed reaction is (2R,3R)-2,3-dihydroxy-3-methylpentanoate + NADP(+) = (S)-2-ethyl-2-hydroxy-3-oxobutanoate + NADPH + H(+). The protein operates within amino-acid biosynthesis; L-isoleucine biosynthesis; L-isoleucine from 2-oxobutanoate: step 2/4. It functions in the pathway amino-acid biosynthesis; L-valine biosynthesis; L-valine from pyruvate: step 2/4. Functionally, involved in the biosynthesis of branched-chain amino acids (BCAA). Catalyzes an alkyl-migration followed by a ketol-acid reduction of (S)-2-acetolactate (S2AL) to yield (R)-2,3-dihydroxy-isovalerate. In the isomerase reaction, S2AL is rearranged via a Mg-dependent methyl migration to produce 3-hydroxy-3-methyl-2-ketobutyrate (HMKB). In the reductase reaction, this 2-ketoacid undergoes a metal-dependent reduction by NADPH to yield (R)-2,3-dihydroxy-isovalerate. This is Ketol-acid reductoisomerase (NADP(+)) from Corynebacterium glutamicum (strain ATCC 13032 / DSM 20300 / JCM 1318 / BCRC 11384 / CCUG 27702 / LMG 3730 / NBRC 12168 / NCIMB 10025 / NRRL B-2784 / 534).